We begin with the raw amino-acid sequence, 105 residues long: Putative RNA-binding protein RbpF (105 aa).

The region spanning 2 to 79 is the RRM domain; the sequence is SIYVGNLSYE…RDLKVNKAKP (78 aa). The segment covering 75 to 84 has biased composition (basic and acidic residues); the sequence is NKAKPKEDRG. The tract at residues 75–105 is disordered; the sequence is NKAKPKEDRGSFGGGNRGGYGGGGGGGRSRY. A compositionally biased stretch (gly residues) spans 85-105; the sequence is SFGGGNRGGYGGGGGGGRSRY.

This Nostoc sp. (strain PCC 7120 / SAG 25.82 / UTEX 2576) protein is Putative RNA-binding protein RbpF (rbpF).